Here is a 381-residue protein sequence, read N- to C-terminus: MAEKTEKPTAKKLRDAAKKGQTFKARDIVALVVIATGALSAPALVDLTRVAAEFTRIASTGAQPNPGAYALAWAKLFLRIAAPFVLLCAAVGALPSLVQSRFTLAVESIRFDLTALDPVKGMKRLFSWRSVKDAVKALLYVGVFAITVRVFADLYHHDVFGLFRARPALLGHMWIVLTVRLVLLFLLCALPVLIVDAAVEYFLYHRELKMDKHEVKQEYKESEGNHEIKSKRREIHQELLSEEIKANVEQSDFIVANPTHIAIGIYVNPDIVPIPFVSVRETNARALAVIRHAEACGVPVVRNVALARSIYRNSPRRYSFVNQDDIDGVMRVLIWLKEVEAANRGGPPREMPPEATHAPDAHGGDAASGGATSAQAGERNA.

Helical transmembrane passes span 28–48 (IVALVVIATGALSAPALVDLT), 80–100 (IAAPFVLLCAAVGALPSLVQS), 134–154 (AVKALLYVGVFAITVRVFADL), and 175–195 (IVLTVRLVLLFLLCALPVLIV). Residues 343–381 (NRGGPPREMPPEATHAPDAHGGDAASGGATSAQAGERNA) are disordered. Residues 364–381 (GDAASGGATSAQAGERNA) are compositionally biased toward low complexity.

The protein belongs to the type III secretion exporter family.

The protein resides in the cell membrane. Its function is as follows. Part of the bsa type III secretion system, is involved in the intracellular replication of invading bacteria inside the host cell. Probably necessary for the lysis of the vacuole membrane and escape into the host cell cytoplasm. The polypeptide is Secretion apparatus protein BsaZ (bsaZ) (Burkholderia thailandensis (strain ATCC 700388 / DSM 13276 / CCUG 48851 / CIP 106301 / E264)).